We begin with the raw amino-acid sequence, 300 residues long: Nucleotide-binding protein Dshi_0209 (300 aa).

ATP is bound at residue Gly20–Thr27. Asp67 to Thr70 is a binding site for GTP.

It belongs to the RapZ-like family.

Displays ATPase and GTPase activities. In Dinoroseobacter shibae (strain DSM 16493 / NCIMB 14021 / DFL 12), this protein is Nucleotide-binding protein Dshi_0209.